A 185-amino-acid polypeptide reads, in one-letter code: uncharacterized protein (185 aa).

Residues 1 to 29 (MKLFSRTSLVALGTAAAITLSGVTAPAFA) form the signal peptide. The tract at residues 41 to 66 (KTAEDNTPEAPGASTPLKLEQPGTIT) is disordered.

Glycosylated; by Pmt.

It localises to the secreted. This is an uncharacterized protein from Corynebacterium glutamicum (strain ATCC 13032 / DSM 20300 / JCM 1318 / BCRC 11384 / CCUG 27702 / LMG 3730 / NBRC 12168 / NCIMB 10025 / NRRL B-2784 / 534).